We begin with the raw amino-acid sequence, 195 residues long: Pyridoxal 5'-phosphate synthase subunit PdxT (195 aa).

53-55 (GES) lines the L-glutamine pocket. Cys82 functions as the Nucleophile in the catalytic mechanism. Residues Arg108 and 134–135 (IR) contribute to the L-glutamine site. Active-site charge relay system residues include His173 and Glu175.

Belongs to the glutaminase PdxT/SNO family. In the presence of PdxS, forms a dodecamer of heterodimers. Only shows activity in the heterodimer.

It catalyses the reaction aldehydo-D-ribose 5-phosphate + D-glyceraldehyde 3-phosphate + L-glutamine = pyridoxal 5'-phosphate + L-glutamate + phosphate + 3 H2O + H(+). The enzyme catalyses L-glutamine + H2O = L-glutamate + NH4(+). It participates in cofactor biosynthesis; pyridoxal 5'-phosphate biosynthesis. Catalyzes the hydrolysis of glutamine to glutamate and ammonia as part of the biosynthesis of pyridoxal 5'-phosphate. The resulting ammonia molecule is channeled to the active site of PdxS. This chain is Pyridoxal 5'-phosphate synthase subunit PdxT, found in Methanobrevibacter smithii (strain ATCC 35061 / DSM 861 / OCM 144 / PS).